The sequence spans 258 residues: MMVLQVSAAPRTVALTALLMVLLTSVVQGRATPENYLFQGRQECYAFNGTQRFLERYIYNREEFARFDSDVGEFRAVTELGRPAAEYWNSQKDILEEKRAVPDRMCRHNYELGGPMTLQRRVQPRVNVSPSKKGPLQHHNLLVCHVTDFYPGSIQVRWFLNGQEETAGVVSTNLIRNGDWTFQILVMLEMTPQQGDVYTCQVEHTSLDSPVTVEWKAQSDSARSKTLTGAGGFVLGLIICGVGIFMHRRSKKVQRGSA.

Positions 1 to 29 are cleaved as a signal peptide; sequence MMVLQVSAAPRTVALTALLMVLLTSVVQG. Residues 30 to 121 are beta-1; it reads RATPENYLFQ…LGGPMTLQRR (92 aa). Residues 30 to 225 lie on the Extracellular side of the membrane; sequence RATPENYLFQ…KAQSDSARSK (196 aa). Intrachain disulfides connect Cys44-Cys106 and Cys144-Cys200. The N-linked (GlcNAc...) asparagine glycan is linked to Asn48. The beta-2 stretch occupies residues 122 to 215; sequence VQPRVNVSPS…SLDSPVTVEW (94 aa). In terms of domain architecture, Ig-like C1-type spans 124-212; it reads PRVNVSPSKK…EHTSLDSPVT (89 aa). The segment at 216–225 is connecting peptide; it reads KAQSDSARSK. A helical membrane pass occupies residues 226 to 246; it reads TLTGAGGFVLGLIICGVGIFM. The Cytoplasmic portion of the chain corresponds to 247 to 258; it reads HRRSKKVQRGSA.

The protein belongs to the MHC class II family. Heterodimer of an alpha and a beta subunit; also referred as MHC class II molecule. In the endoplasmic reticulum (ER) it forms a heterononamer; 3 MHC class II molecules bind to a CD74 homotrimer (also known as invariant chain or HLA class II histocompatibility antigen gamma chain). In the endosomal/lysosomal system; CD74 undergoes sequential degradation by various proteases; leaving a small fragment termed CLIP on each MHC class II molecule. MHC class II molecule interacts with HLA_DM, and HLA_DO in B-cells, in order to release CLIP and facilitate the binding of antigenic peptides.

The protein resides in the cell membrane. Its subcellular location is the endoplasmic reticulum membrane. The protein localises to the golgi apparatus. It is found in the trans-Golgi network membrane. It localises to the endosome membrane. The protein resides in the lysosome membrane. Binds peptides derived from antigens that access the endocytic route of antigen presenting cells (APC) and presents them on the cell surface for recognition by the CD4 T-cells. The peptide binding cleft accommodates peptides of 10-30 residues. The peptides presented by MHC class II molecules are generated mostly by degradation of proteins that access the endocytic route, where they are processed by lysosomal proteases and other hydrolases. Exogenous antigens that have been endocytosed by the APC are thus readily available for presentation via MHC II molecules, and for this reason this antigen presentation pathway is usually referred to as exogenous. As membrane proteins on their way to degradation in lysosomes as part of their normal turn-over are also contained in the endosomal/lysosomal compartments, exogenous antigens must compete with those derived from endogenous components. Autophagy is also a source of endogenous peptides, autophagosomes constitutively fuse with MHC class II loading compartments. In addition to APCs, other cells of the gastrointestinal tract, such as epithelial cells, express MHC class II molecules and CD74 and act as APCs, which is an unusual trait of the GI tract. To produce a MHC class II molecule that presents an antigen, three MHC class II molecules (heterodimers of an alpha and a beta chain) associate with a CD74 trimer in the ER to form a heterononamer. Soon after the entry of this complex into the endosomal/lysosomal system where antigen processing occurs, CD74 undergoes a sequential degradation by various proteases, including CTSS and CTSL, leaving a small fragment termed CLIP (class-II-associated invariant chain peptide). The removal of CLIP is facilitated by HLA-DM via direct binding to the alpha-beta-CLIP complex so that CLIP is released. HLA-DM stabilizes MHC class II molecules until primary high affinity antigenic peptides are bound. The MHC II molecule bound to a peptide is then transported to the cell membrane surface. In B-cells, the interaction between HLA-DM and MHC class II molecules is regulated by HLA-DO. Primary dendritic cells (DCs) also to express HLA-DO. Lysosomal microenvironment has been implicated in the regulation of antigen loading into MHC II molecules, increased acidification produces increased proteolysis and efficient peptide loading. This chain is HLA class II histocompatibility antigen, DP beta 1 chain (HLA-DPB1), found in Homo sapiens (Human).